A 254-amino-acid polypeptide reads, in one-letter code: Major prion protein (254 aa).

A signal peptide spans 1 to 22 (MANLSYWLLALFVATWTDVGLC). An interaction with GRB2, ERI3 and SYN1 region spans residues 23–231 (KKRPKPGGWN…SQAYYDGRRS (209 aa)). Positions 25–108 (RPKPGGWNTG…WNKPNKPKTS (84 aa)) are disordered. 5 consecutive repeat copies span residues 51–59 (PQGGGTWGQ), 60–67 (PHGGGWGQ), 68–75 (PHGGGWGQ), 76–83 (PHGGGWGQ), and 84–91 (PHGGGWGQ). Residues 51 to 91 (PQGGGTWGQPHGGGWGQPHGGGWGQPHGGGWGQPHGGGWGQ) are 5 X 8 AA tandem repeats of P-H-G-G-G-W-G-Q. Over residues 52–95 (QGGGTWGQPHGGGWGQPHGGGWGQPHGGGWGQPHGGGWGQGGGT) the composition is skewed to gly residues. Residues His61, Gly62, Gly63, His69, Gly70, Gly71, His77, Gly78, Gly79, His85, Gly86, and Gly87 each contribute to the Cu(2+) site. The segment at 90 to 231 (GQGGGTHNQW…SQAYYDGRRS (142 aa)) is prP27-30 (protease resistant core). Cysteines 179 and 214 form a disulfide. N-linked (GlcNAc...) asparagine glycans are attached at residues Asn181 and Asn197. Ser231 carries the GPI-anchor amidated serine lipid modification. The propeptide at 232-254 (SAVLFSSPPVILLISFLIFLIVG) is removed in mature form.

The protein belongs to the prion family. As to quaternary structure, monomer and homodimer. Has a tendency to aggregate into amyloid fibrils containing a cross-beta spine, formed by a steric zipper of superposed beta-strands. Soluble oligomers may represent an intermediate stage on the path to fibril formation. Copper binding may promote oligomerization. Interacts with GRB2, APP, ERI3/PRNPIP and SYN1. Mislocalized cytosolically exposed PrP interacts with MGRN1; this interaction alters MGRN1 subcellular location and causes lysosomal enlargement. Interacts with KIAA1191.

The protein resides in the cell membrane. It localises to the golgi apparatus. In terms of biological role, its primary physiological function is unclear. Has cytoprotective activity against internal or environmental stresses. May play a role in neuronal development and synaptic plasticity. May be required for neuronal myelin sheath maintenance. May play a role in iron uptake and iron homeostasis. Soluble oligomers are toxic to cultured neuroblastoma cells and induce apoptosis (in vitro). Association with GPC1 (via its heparan sulfate chains) targets PRNP to lipid rafts. Also provides Cu(2+) or Zn(2+) for the ascorbate-mediated GPC1 deaminase degradation of its heparan sulfate side chains. This chain is Major prion protein (PRNP), found in Nothocricetulus migratorius (Gray dwarf hamster).